A 279-amino-acid chain; its full sequence is Undecaprenyl-diphosphatase (279 aa).

6 helical membrane passes run 45–65 (FVEM…IVIY), 85–105 (WQLW…ALPF), 113–133 (FNFM…FIWV), 188–208 (SVAA…YSGL), 226–246 (LILL…IRFL), and 255–275 (FTIF…YWLV).

The protein belongs to the UppP family.

Its subcellular location is the cell membrane. The catalysed reaction is di-trans,octa-cis-undecaprenyl diphosphate + H2O = di-trans,octa-cis-undecaprenyl phosphate + phosphate + H(+). Catalyzes the dephosphorylation of undecaprenyl diphosphate (UPP). Confers resistance to bacitracin. The protein is Undecaprenyl-diphosphatase of Streptococcus agalactiae serotype Ia (strain ATCC 27591 / A909 / CDC SS700).